Reading from the N-terminus, the 753-residue chain is 5-methyltetrahydropteroyltriglutamate--homocysteine methyltransferase (753 aa).

5-methyltetrahydropteroyltri-L-glutamate is bound by residues 17 to 20 (RELK) and Lys117. Residues 431–433 (IGS) and Glu484 each bind L-homocysteine. L-methionine is bound by residues 431–433 (IGS) and Glu484. Residues 515–516 (RC) and Trp561 each bind 5-methyltetrahydropteroyltri-L-glutamate. Asp599 contributes to the L-homocysteine binding site. Asp599 contacts L-methionine. Position 605 (Glu605) interacts with 5-methyltetrahydropteroyltri-L-glutamate. Residues His641, Cys643, and Glu665 each coordinate Zn(2+). His694 (proton donor) is an active-site residue. Cys726 lines the Zn(2+) pocket.

It belongs to the vitamin-B12 independent methionine synthase family. Zn(2+) is required as a cofactor.

The catalysed reaction is 5-methyltetrahydropteroyltri-L-glutamate + L-homocysteine = tetrahydropteroyltri-L-glutamate + L-methionine. It functions in the pathway amino-acid biosynthesis; L-methionine biosynthesis via de novo pathway; L-methionine from L-homocysteine (MetE route): step 1/1. Its function is as follows. Catalyzes the transfer of a methyl group from 5-methyltetrahydrofolate to homocysteine resulting in methionine formation. The polypeptide is 5-methyltetrahydropteroyltriglutamate--homocysteine methyltransferase (Escherichia coli O8 (strain IAI1)).